The primary structure comprises 141 residues: Ribosome-binding factor A (141 aa).

It belongs to the RbfA family. As to quaternary structure, monomer. Binds 30S ribosomal subunits, but not 50S ribosomal subunits or 70S ribosomes.

Its subcellular location is the cytoplasm. Its function is as follows. One of several proteins that assist in the late maturation steps of the functional core of the 30S ribosomal subunit. Associates with free 30S ribosomal subunits (but not with 30S subunits that are part of 70S ribosomes or polysomes). Required for efficient processing of 16S rRNA. May interact with the 5'-terminal helix region of 16S rRNA. In Maricaulis maris (strain MCS10) (Caulobacter maris), this protein is Ribosome-binding factor A.